Here is a 429-residue protein sequence, read N- to C-terminus: Serine--tRNA ligase (429 aa).

236 to 238 (TGE) is a binding site for L-serine. Position 267–269 (267–269 (RSE)) interacts with ATP. An L-serine-binding site is contributed by Glu-290. Position 354–357 (354–357 (EISS)) interacts with ATP. Ser-390 is an L-serine binding site.

It belongs to the class-II aminoacyl-tRNA synthetase family. Type-1 seryl-tRNA synthetase subfamily. In terms of assembly, homodimer. The tRNA molecule binds across the dimer.

It is found in the cytoplasm. It carries out the reaction tRNA(Ser) + L-serine + ATP = L-seryl-tRNA(Ser) + AMP + diphosphate + H(+). It catalyses the reaction tRNA(Sec) + L-serine + ATP = L-seryl-tRNA(Sec) + AMP + diphosphate + H(+). The protein operates within aminoacyl-tRNA biosynthesis; selenocysteinyl-tRNA(Sec) biosynthesis; L-seryl-tRNA(Sec) from L-serine and tRNA(Sec): step 1/1. In terms of biological role, catalyzes the attachment of serine to tRNA(Ser). Is also able to aminoacylate tRNA(Sec) with serine, to form the misacylated tRNA L-seryl-tRNA(Sec), which will be further converted into selenocysteinyl-tRNA(Sec). This is Serine--tRNA ligase from Vesicomyosocius okutanii subsp. Calyptogena okutanii (strain HA).